A 605-amino-acid chain; its full sequence is Elongation factor 4 (605 aa).

The tr-type G domain maps to 9-191; that stretch reads DTIRNFCIIA…AIIKRVPAPV (183 aa). Residues 21 to 26 and 138 to 141 contribute to the GTP site; these read DHGKST and NKID.

It belongs to the TRAFAC class translation factor GTPase superfamily. Classic translation factor GTPase family. LepA subfamily.

The protein resides in the cell inner membrane. It catalyses the reaction GTP + H2O = GDP + phosphate + H(+). Its function is as follows. Required for accurate and efficient protein synthesis under certain stress conditions. May act as a fidelity factor of the translation reaction, by catalyzing a one-codon backward translocation of tRNAs on improperly translocated ribosomes. Back-translocation proceeds from a post-translocation (POST) complex to a pre-translocation (PRE) complex, thus giving elongation factor G a second chance to translocate the tRNAs correctly. Binds to ribosomes in a GTP-dependent manner. In Chlorobium phaeobacteroides (strain BS1), this protein is Elongation factor 4.